A 155-amino-acid chain; its full sequence is Transcriptional repressor NrdR (155 aa).

A zinc finger lies at 3–34; it reads CPYCQNADTRVVDSRLIGEGEQVRRRRQCPSC. An ATP-cone domain is found at 49–139; it reads PRVVKSDGRR…VYRRFEDVGA (91 aa).

This sequence belongs to the NrdR family. It depends on Zn(2+) as a cofactor.

Functionally, negatively regulates transcription of bacterial ribonucleotide reductase nrd genes and operons by binding to NrdR-boxes. The polypeptide is Transcriptional repressor NrdR (Halorhodospira halophila (strain DSM 244 / SL1) (Ectothiorhodospira halophila (strain DSM 244 / SL1))).